The sequence spans 538 residues: Myeloid cell nuclear differentiation antigen-like protein (538 aa).

In terms of domain architecture, Pyrin spans 1–87 (MAEYKKIVLL…AKKLKTEKAK (87 aa)). A disordered region spans residues 120 to 306 (SYKSVPSSKK…PQPQNQNIPR (187 aa)). Basic and acidic residues-rich tracts occupy residues 135–153 (AKTE…DHLP) and 245–262 (RREE…KEPD). Residues 276-305 (SPILHSSSSASSNIPSATNQKPQPQNQNIP) are compositionally biased toward low complexity. In terms of domain architecture, HIN-200 spans 299–499 (PQNQNIPRGA…CGDHSFVKIK (201 aa)).

This sequence belongs to the HIN-200 family. As to expression, highest expression observed in spleen and thymus with moderate levels in bone marrow, lung, skin and heart, low levels in muscle, liver and intestine and little or no expression in brain and pancreas.

It localises to the nucleus. Its function is as follows. Suppresses cell growth when expressed ectopically. This chain is Myeloid cell nuclear differentiation antigen-like protein, found in Mus musculus (Mouse).